Reading from the N-terminus, the 312-residue chain is ADP-L-glycero-D-manno-heptose-6-epimerase (312 aa).

NADP(+)-binding positions include 10–11 (FI), 31–32 (DN), K38, K53, 75–79 (EGACS), and N92. Y140 functions as the Proton acceptor in the catalytic mechanism. Residue K144 participates in NADP(+) binding. Substrate is bound at residue N169. NADP(+) is bound by residues V170 and K178. The Proton acceptor role is filled by K178. Residues S180, H187, 201 to 204 (FEGS), R209, and Y274 contribute to the substrate site.

The protein belongs to the NAD(P)-dependent epimerase/dehydratase family. HldD subfamily. In terms of assembly, homopentamer. NADP(+) serves as cofactor.

The catalysed reaction is ADP-D-glycero-beta-D-manno-heptose = ADP-L-glycero-beta-D-manno-heptose. The protein operates within nucleotide-sugar biosynthesis; ADP-L-glycero-beta-D-manno-heptose biosynthesis; ADP-L-glycero-beta-D-manno-heptose from D-glycero-beta-D-manno-heptose 7-phosphate: step 4/4. Catalyzes the interconversion between ADP-D-glycero-beta-D-manno-heptose and ADP-L-glycero-beta-D-manno-heptose via an epimerization at carbon 6 of the heptose. This is ADP-L-glycero-D-manno-heptose-6-epimerase from Proteus mirabilis (strain HI4320).